Reading from the N-terminus, the 37-residue chain is Large ribosomal subunit protein bL36 (37 aa).

This sequence belongs to the bacterial ribosomal protein bL36 family.

The chain is Large ribosomal subunit protein bL36 from Synechococcus sp. (strain WH7803).